Consider the following 172-residue polypeptide: Photosystem I assembly protein Ycf3 (172 aa).

TPR repeat units follow at residues 35 to 70 (AFTY…EIDP), 74 to 107 (SYIL…NPFL), and 122 to 155 (GEQA…TPGN).

Belongs to the Ycf3 family.

The protein resides in the plastid. The protein localises to the chloroplast thylakoid membrane. Functionally, essential for the assembly of the photosystem I (PSI) complex. May act as a chaperone-like factor to guide the assembly of the PSI subunits. The chain is Photosystem I assembly protein Ycf3 from Sorghum bicolor (Sorghum).